A 525-amino-acid chain; its full sequence is UPF0288 protein MM_0912 (525 aa).

The protein belongs to the UPF0288 family.

The chain is UPF0288 protein MM_0912 from Methanosarcina mazei (strain ATCC BAA-159 / DSM 3647 / Goe1 / Go1 / JCM 11833 / OCM 88) (Methanosarcina frisia).